Consider the following 273-residue polypeptide: Tryptase-2 (273 aa).

Residues 1–18 (MLHLLALALLLSLVSAAP) form the signal peptide. Positions 19–28 (APGQALQRSG) are cleaved as a propeptide — activation peptide. Residues 29–270 (IIGGKEAPGS…YLDWIHQYVP (242 aa)) enclose the Peptidase S1 domain. Cys57 and Cys73 are joined by a disulfide. Residues His72 and Asp119 each act as charge relay system in the active site. 3 cysteine pairs are disulfide-bonded: Cys153–Cys228, Cys186–Cys209, and Cys218–Cys246. The Charge relay system role is filled by Ser222. An N-linked (GlcNAc...) asparagine glycan is attached at Asn231.

This sequence belongs to the peptidase S1 family. Tryptase subfamily. As to quaternary structure, homotetramer.

The protein resides in the secreted. It catalyses the reaction Preferential cleavage: Arg-|-Xaa, Lys-|-Xaa, but with more restricted specificity than trypsin.. Functionally, tryptase is the major neutral protease present in mast cells and is secreted upon the coupled activation-degranulation response of this cell type. This chain is Tryptase-2, found in Ovis aries (Sheep).